The primary structure comprises 663 residues: MTMVEHYPFKIHSDFEPQGDQPQAIKEIVDGIKAGKRHQTLLGATGTGKTFTMSNVIKEVGKPTLIIAHNKTLAGQLYSEFKEFFPENRVEYFVSYYDYYQPEAYVPSTDTFIEKDASINDEIDQLRHSATSALFERDDVIIIASVSCIYGLGNPEEYKDLVVSVRVGMEMDRSELLRKLVDVQYTRNDIDFQRGTFRVRGDVVEIFPASKEELCIRVEFFGDEIDRIREVNYLTGEVLKEREHFAIFPASHFVTREEKLKVAIERIEKELEERLKELRDENKLLEAQRLEQRTNYDLEMMREMGFCSGIENYSVHLTLRPLGSTPYTLLDYFGDDWLVMIDESHVTLPQVRGMYNGDRARKQVLVDHGFRLPSALDNRPLKFEEFEEKTKQLVYVSATPGPYEIEHTDKMVEQIIRPTGLLDPKIEVRPTENQIDDLLSEIQTRVERNERVLVTTLTKKMSEDLTTYMKEAGIKVNYLHSEIKTLERIEIIRDLRMGTYDVIVGINLLREGIDIPEVSLVVILDADKEGFLRSNRSLIQTIGRAARNDKGEVIMYADKMTDSMKYAIDETQRRREIQMKHNEKHGITPKTINKKIHDLISATVENDENNDKAQTVIPKKMTKKERQKTIDNIEKEMKQAAKDLDFEKATELRDMLFELKAEG.

Positions 30–417 (DGIKAGKRHQ…TDKMVEQIIR (388 aa)) constitute a Helicase ATP-binding domain. 43 to 50 (GATGTGKT) is a binding site for ATP. A Beta-hairpin motif is present at residues 96 to 119 (YYDYYQPEAYVPSTDTFIEKDASI). One can recognise a Helicase C-terminal domain in the interval 434–600 (QIDDLLSEIQ…TINKKIHDLI (167 aa)). Residues 627–662 (QKTIDNIEKEMKQAAKDLDFEKATELRDMLFELKAE) enclose the UVR domain.

It belongs to the UvrB family. As to quaternary structure, forms a heterotetramer with UvrA during the search for lesions. Interacts with UvrC in an incision complex.

The protein localises to the cytoplasm. Functionally, the UvrABC repair system catalyzes the recognition and processing of DNA lesions. A damage recognition complex composed of 2 UvrA and 2 UvrB subunits scans DNA for abnormalities. Upon binding of the UvrA(2)B(2) complex to a putative damaged site, the DNA wraps around one UvrB monomer. DNA wrap is dependent on ATP binding by UvrB and probably causes local melting of the DNA helix, facilitating insertion of UvrB beta-hairpin between the DNA strands. Then UvrB probes one DNA strand for the presence of a lesion. If a lesion is found the UvrA subunits dissociate and the UvrB-DNA preincision complex is formed. This complex is subsequently bound by UvrC and the second UvrB is released. If no lesion is found, the DNA wraps around the other UvrB subunit that will check the other stand for damage. The polypeptide is UvrABC system protein B (Staphylococcus aureus (strain Mu50 / ATCC 700699)).